A 414-amino-acid chain; its full sequence is Putative competence-damage inducible protein (414 aa).

This sequence belongs to the CinA family.

The polypeptide is Putative competence-damage inducible protein (Listeria monocytogenes serotype 4b (strain CLIP80459)).